The following is a 302-amino-acid chain: Snake venom metalloprotease inhibitor 02A10 (302 aa).

The signal sequence occupies residues 1–23 (MSVSRLAASGLLLVSLLALALDG). A propeptide spanning residues 24-47 (KPVEKWSPWLWPPRPRPPIPPLQQ) is cleaved from the precursor. The interval 32–302 (WLWPPRPRPP…CPKLPPSGGH (271 aa)) is disordered. The segment covering 33–44 (LWPPRPRPPIPP) has biased composition (pro residues). Q48 is subject to Pyrrolidone carboxylic acid. Residues 51–58 (LDPPIPQQ) constitute a propeptide that is removed on maturation. The residue at position 59 (Q59) is a Pyrrolidone carboxylic acid. The propeptide occupies 62–69 (LDPPIPQQ). The residue at position 70 (Q70) is a Pyrrolidone carboxylic acid. A propeptide spanning residues 73–80 (LDPPIPQQ) is cleaved from the precursor. Residue Q81 is modified to Pyrrolidone carboxylic acid. Positions 84-91 (LNPPIPQQ) are excised as a propeptide. The residue at position 92 (Q92) is a Pyrrolidone carboxylic acid. A propeptide spanning residues 95–102 (LDPPIPQQ) is cleaved from the precursor. The residue at position 103 (Q103) is a Pyrrolidone carboxylic acid. The propeptide occupies 106–113 (LNPPIPQQ). Residue Q114 is modified to Pyrrolidone carboxylic acid. A propeptide spanning residues 117–124 (LNPPIPQQ) is cleaved from the precursor. Q125 bears the Pyrrolidone carboxylic acid mark. A propeptide spanning residues 128 to 135 (LNPPIPQQ) is cleaved from the precursor. Q136 bears the Pyrrolidone carboxylic acid mark. Residues 139–146 (LNPPIPQQ) constitute a propeptide that is removed on maturation. Residue Q147 is modified to Pyrrolidone carboxylic acid. Residues 150-157 (LDPPIPQQ) constitute a propeptide that is removed on maturation. Pyrrolidone carboxylic acid is present on Q158. Positions 161–168 (LDPPIPQQ) are excised as a propeptide. Residue Q169 is modified to Pyrrolidone carboxylic acid. Positions 172-179 (LDPPIPQQ) are excised as a propeptide. A Pyrrolidone carboxylic acid modification is found at Q180. Positions 183–190 (LNPPIPQQ) are excised as a propeptide. Pyrrolidone carboxylic acid is present on Q191. The propeptide occupies 194–201 (LDPPIPQQ). Residue Q202 is modified to Pyrrolidone carboxylic acid. Positions 205–212 (LDPPIPQQ) are excised as a propeptide. Q213 is subject to Pyrrolidone carboxylic acid. A propeptide spanning residues 216–223 (LNPPIPQQ) is cleaved from the precursor. Q224 is subject to Pyrrolidone carboxylic acid. Residues 227 to 273 (QRPLQPEVPSLMELHQERQKQGRMMHHDEDPGDAAEGPRRQKKEPGK) constitute a propeptide that is removed on maturation. 2 stretches are compositionally biased toward basic and acidic residues: residues 240 to 255 (LHQE…HHDE) and 262 to 273 (EGPRRQKKEPGK). The cysteines at positions 279 and 293 are disulfide-linked. The propeptide occupies 294-302 (PKLPPSGGH).

The protein in the C-terminal section; belongs to the natriuretic peptide family. In terms of tissue distribution, expressed by the venom gland.

It localises to the secreted. In terms of biological role, pEKW peptides may serve as metalloproteinase inhibitors during glandular storage. Their inhibition may be instantly disengaged, by dilution or physiochemical change, when venom is injected into tissue of the victim. Exhibits hypotensive and vasodepressor activity. Acts by activating natriuretic receptors (NPR1 and/or NPR2 and/or NPR3). This Cerastes cerastes (Horned desert viper) protein is Snake venom metalloprotease inhibitor 02A10 (Svmpi-Cce12).